Consider the following 191-residue polypeptide: Ribonuclease HII (191 aa).

Positions 16–191 constitute an RNase H type-2 domain; sequence INLIGIDEAG…KLHRKSFKLL (176 aa). A divalent metal cation is bound by residues Asp22, Glu23, and Asp110.

It belongs to the RNase HII family. The cofactor is Mn(2+). It depends on Mg(2+) as a cofactor.

The protein resides in the cytoplasm. The catalysed reaction is Endonucleolytic cleavage to 5'-phosphomonoester.. Its function is as follows. Endonuclease that specifically degrades the RNA of RNA-DNA hybrids. This chain is Ribonuclease HII, found in Campylobacter jejuni subsp. jejuni serotype O:6 (strain 81116 / NCTC 11828).